The primary structure comprises 133 residues: Small ribosomal subunit protein bS6 (133 aa).

The protein belongs to the bacterial ribosomal protein bS6 family.

Its function is as follows. Binds together with bS18 to 16S ribosomal RNA. In Chlorobium luteolum (strain DSM 273 / BCRC 81028 / 2530) (Pelodictyon luteolum), this protein is Small ribosomal subunit protein bS6.